Reading from the N-terminus, the 72-residue chain is Large ribosomal subunit protein uL29 (72 aa).

Belongs to the universal ribosomal protein uL29 family.

This chain is Large ribosomal subunit protein uL29, found in Chlamydia abortus (strain DSM 27085 / S26/3) (Chlamydophila abortus).